Consider the following 120-residue polypeptide: Ribonuclease P protein component 2 (120 aa).

This sequence belongs to the eukaryotic/archaeal RNase P protein component 2 family. Homodimer in solution. Component of RNase P which consists of a catalytic RNA component and at least 5 protein subunits. Forms a heterotetrameric subcomplex with Rnp3. Reconstituted enzyme missing individual protein subunits is suboptimally active, showing each subunit contributes to optimization of activity.

The protein localises to the cytoplasm. It carries out the reaction Endonucleolytic cleavage of RNA, removing 5'-extranucleotides from tRNA precursor.. Functionally, part of ribonuclease P, a protein complex that generates mature tRNA molecules by cleaving their 5'-ends. This is Ribonuclease P protein component 2 from Pyrococcus horikoshii (strain ATCC 700860 / DSM 12428 / JCM 9974 / NBRC 100139 / OT-3).